Reading from the N-terminus, the 283-residue chain is Non-selective voltage-gated ion channel VDAC3 (283 aa).

At cysteine 2 the chain carries N-acetylcysteine. Position 4 is a phosphothreonine (threonine 4). An N6-acetyllysine mark is found at lysine 12, lysine 15, and lysine 20. The next 2 membrane-spanning stretches (beta stranded) occupy residues 26-35 and 39-47; these read MVKIDLRTKS and VEFSTSGHA. Residue lysine 53 forms a Glycyl lysine isopeptide (Lys-Gly) (interchain with G-Cter in ubiquitin) linkage. 3 consecutive transmembrane segments (beta stranded) span residues 54-64, 69-76, and 80-89; these read ASGNLETKYKV, LTFTQKWN, and TLGTEISLEN. The residue at position 90 (lysine 90) is an N6-acetyllysine. A beta stranded transmembrane segment spans residues 95 to 104; that stretch reads LKLTLDTIFV. Residues lysine 109 and lysine 110 each participate in a glycyl lysine isopeptide (Lys-Gly) (interchain with G-Cter in ubiquitin) cross-link. The next 10 beta stranded transmembrane spans lie at 111–120, 123–130, 137–145, 150–158, 163–175, 178–185, 189–198, 202–211, 218–227, and 231–238; these read SGKLKASYKR, FSLGSNVD, TIYGWAVLA, LAGYQMSFD, KLSQ…GYKA, FQLHTHVN, EFGGSIYQKV, IETSINLAWT, RFGIAAKYKL, and TSLSAKVN. At serine 241 the chain carries Phosphoserine. NAD(+) contacts are provided by residues 242-244 and 260-264; these read LIG and SALID. 2 beta stranded membrane-spanning segments follow: residues 242–251 and 254–263; these read LIGLGYTQTL and GVKLTLSALI. Residue lysine 266 is modified to N6-acetyllysine; alternate. A Glycyl lysine isopeptide (Lys-Gly) (interchain with G-Cter in ubiquitin); alternate cross-link involves residue lysine 266. The beta stranded transmembrane segment at 273–282 threads the bilayer; sequence HKVGLGFELE.

It belongs to the eukaryotic mitochondrial porin family. Interacts with ARMC12 in a TBC1D21-dependent manner. Interacts with MISFA. Ubiquitinated by PRKN during mitophagy, leading to its degradation and enhancement of mitophagy. Deubiquitinated by USP30.

It localises to the mitochondrion outer membrane. It is found in the membrane. It catalyses the reaction chloride(in) = chloride(out). The catalysed reaction is K(+)(in) = K(+)(out). In terms of biological role, non-selective voltage-gated ion channel that mediates the transport of anions and cations through the mitochondrion outer membrane and plasma membrane. Forms a high-conducting channel with a stable open state and a voltage-induced closure with a mild preference for anions over cations. Involved in male fertility and sperm mitochondrial sheath formation. The protein is Non-selective voltage-gated ion channel VDAC3 of Oryctolagus cuniculus (Rabbit).